A 264-amino-acid polypeptide reads, in one-letter code: Forkhead box protein pes-1 (264 aa).

Disordered stretches follow at residues 15 to 36 (DLDNCSSLPPTPPKTASPGNSK) and 50 to 93 (DSST…PTKR). Residues 50–64 (DSSTSSSCSVSPASS) are compositionally biased toward low complexity. Residues 70 to 89 (ESVGQQQSGRNSPVSSSTES) are compositionally biased toward polar residues. The fork-head DNA-binding region spans 93–186 (RPKYSYNALI…ISNNCGKLRR (94 aa)).

The protein localises to the nucleus. The protein resides in the cytoplasm. Its function is as follows. Transcription factor. Plays a role in embryogenesis and later development, perhaps acting redundantly with forkhead protein fkh-2. This Caenorhabditis elegans protein is Forkhead box protein pes-1.